The primary structure comprises 168 residues: Protein-export protein SecB (168 aa).

This sequence belongs to the SecB family. In terms of assembly, homotetramer, a dimer of dimers. One homotetramer interacts with 1 SecA dimer.

It localises to the cytoplasm. In terms of biological role, one of the proteins required for the normal export of preproteins out of the cell cytoplasm. It is a molecular chaperone that binds to a subset of precursor proteins, maintaining them in a translocation-competent state. It also specifically binds to its receptor SecA. This is Protein-export protein SecB from Rhizobium meliloti (strain 1021) (Ensifer meliloti).